The chain runs to 187 residues: uncharacterized protein (187 aa).

Residues 1-25 (MSKFVKTAIAAAMVMGAFTSTATIA) form the signal peptide.

Belongs to the fimbrial protein family.

Part of the yfcOPQRSUV fimbrial operon. Could contribute to adhesion to various surfaces in specific environmental niches. Increases adhesion to eukaryotic T24 bladder epithelial cells in the absence of fim genes. This is an uncharacterized protein from Escherichia coli (strain K12).